The chain runs to 443 residues: Thymidine phosphorylase (443 aa).

This sequence belongs to the thymidine/pyrimidine-nucleoside phosphorylase family. As to quaternary structure, homodimer.

The catalysed reaction is thymidine + phosphate = 2-deoxy-alpha-D-ribose 1-phosphate + thymine. The protein operates within pyrimidine metabolism; dTMP biosynthesis via salvage pathway; dTMP from thymine: step 1/2. Functionally, the enzymes which catalyze the reversible phosphorolysis of pyrimidine nucleosides are involved in the degradation of these compounds and in their utilization as carbon and energy sources, or in the rescue of pyrimidine bases for nucleotide synthesis. In Aliivibrio salmonicida (strain LFI1238) (Vibrio salmonicida (strain LFI1238)), this protein is Thymidine phosphorylase.